The following is a 256-amino-acid chain: Imidazole glycerol phosphate synthase subunit HisF (256 aa).

Residues Asp12 and Asp131 contribute to the active site.

The protein belongs to the HisA/HisF family. In terms of assembly, heterodimer of HisH and HisF.

It localises to the cytoplasm. The enzyme catalyses 5-[(5-phospho-1-deoxy-D-ribulos-1-ylimino)methylamino]-1-(5-phospho-beta-D-ribosyl)imidazole-4-carboxamide + L-glutamine = D-erythro-1-(imidazol-4-yl)glycerol 3-phosphate + 5-amino-1-(5-phospho-beta-D-ribosyl)imidazole-4-carboxamide + L-glutamate + H(+). Its pathway is amino-acid biosynthesis; L-histidine biosynthesis; L-histidine from 5-phospho-alpha-D-ribose 1-diphosphate: step 5/9. Functionally, IGPS catalyzes the conversion of PRFAR and glutamine to IGP, AICAR and glutamate. The HisF subunit catalyzes the cyclization activity that produces IGP and AICAR from PRFAR using the ammonia provided by the HisH subunit. This is Imidazole glycerol phosphate synthase subunit HisF from Bifidobacterium longum (strain NCC 2705).